The sequence spans 181 residues: FMN reductase (NADH) RutF (181 aa).

Belongs to the non-flavoprotein flavin reductase family. RutF subfamily.

It carries out the reaction FMNH2 + NAD(+) = FMN + NADH + 2 H(+). Its function is as follows. Catalyzes the reduction of FMN to FMNH2 which is used to reduce pyrimidine by RutA via the Rut pathway. The protein is FMN reductase (NADH) RutF of Ancylobacter novellus (strain ATCC 8093 / DSM 506 / JCM 20403 / CCM 1077 / IAM 12100 / NBRC 12443 / NCIMB 10456) (Starkeya novella).